Reading from the N-terminus, the 249-residue chain is 2,3-bisphosphoglycerate-dependent phosphoglycerate mutase (249 aa).

Substrate-binding positions include Arg9–Asn16, Thr22–Gly23, Arg61, Glu88–Tyr91, Lys99, Arg115–Arg116, and Gly184–Asn185. The Tele-phosphohistidine intermediate role is filled by His10. The active-site Proton donor/acceptor is Glu88.

Belongs to the phosphoglycerate mutase family. BPG-dependent PGAM subfamily. In terms of assembly, homodimer.

It catalyses the reaction (2R)-2-phosphoglycerate = (2R)-3-phosphoglycerate. Its pathway is carbohydrate degradation; glycolysis; pyruvate from D-glyceraldehyde 3-phosphate: step 3/5. Catalyzes the interconversion of 2-phosphoglycerate and 3-phosphoglycerate. This is 2,3-bisphosphoglycerate-dependent phosphoglycerate mutase from Xanthomonas campestris pv. campestris (strain B100).